The sequence spans 387 residues: Exodeoxyribonuclease 7 large subunit (387 aa).

This sequence belongs to the XseA family. In terms of assembly, heterooligomer composed of large and small subunits.

The protein localises to the cytoplasm. It catalyses the reaction Exonucleolytic cleavage in either 5'- to 3'- or 3'- to 5'-direction to yield nucleoside 5'-phosphates.. Its function is as follows. Bidirectionally degrades single-stranded DNA into large acid-insoluble oligonucleotides, which are then degraded further into small acid-soluble oligonucleotides. The protein is Exodeoxyribonuclease 7 large subunit of Campylobacter jejuni subsp. doylei (strain ATCC BAA-1458 / RM4099 / 269.97).